A 143-amino-acid chain; its full sequence is Small ribosomal subunit protein uS12 (143 aa).

Positions 1-19 (MGKPRGIRTARKHVNHRRE) are enriched in basic residues. Positions 1–21 (MGKPRGIRTARKHVNHRREQR) are disordered. The residue at position 62 (Pro-62) is a Hydroxyproline.

This sequence belongs to the universal ribosomal protein uS12 family. As to quaternary structure, component of the 40S small ribosomal subunit.

The protein localises to the cytoplasm. The protein resides in the cytosol. Its subcellular location is the rough endoplasmic reticulum. This chain is Small ribosomal subunit protein uS12 (RpS23), found in Papilio dardanus (African swallowtail butterfly).